A 212-amino-acid polypeptide reads, in one-letter code: ATP phosphoribosyltransferase (212 aa).

It belongs to the ATP phosphoribosyltransferase family. Short subfamily. Heteromultimer composed of HisG and HisZ subunits.

It is found in the cytoplasm. It carries out the reaction 1-(5-phospho-beta-D-ribosyl)-ATP + diphosphate = 5-phospho-alpha-D-ribose 1-diphosphate + ATP. It participates in amino-acid biosynthesis; L-histidine biosynthesis; L-histidine from 5-phospho-alpha-D-ribose 1-diphosphate: step 1/9. Its function is as follows. Catalyzes the condensation of ATP and 5-phosphoribose 1-diphosphate to form N'-(5'-phosphoribosyl)-ATP (PR-ATP). Has a crucial role in the pathway because the rate of histidine biosynthesis seems to be controlled primarily by regulation of HisG enzymatic activity. This is ATP phosphoribosyltransferase from Clostridium novyi (strain NT).